The sequence spans 935 residues: MAYGEPYYSSKPDKDFNFGSTMARRQMTPTMVTKLPKFVRNSPQAYDWIVRGLIFPTIGKTYFQRVVVITGGLEDGTYGSFAFDGKEWVGIYPIEHLNLMSSLKLIHKANALQERLRLSQEEKATLALDVQFLQHENVRLKEMIPKPEPRKIQMKWIIMGAVLTFLSLIPGGYAHSQTNNTIFTDMIAACKYSTETLTENLDLRIKLALANITISDKLDAVRQILNFAFVPRAHWLRTVFYYIHYYEMWNIFMFVLAIGTVMRSARPGTDLVTLATSHLSGFRMAVLPTIPFHTTMTLWVMNTLMVCYYFDNLLAITLAILAPILGIIFLCFMEDSNYVSQIRGLIATAVLIAGGHACLTLTGTTTSLFVVILTCRFIRMATVFIGTRFEIRDANGKVVATVPTRIKNVAFDFFQKLKQSGVRVGVNEFVVIKPGALCVIDTPEGKGTGFFSGNDIVTAAHVVGNNTFVNVCYEGLMYEAKVRYMPEKDIAFLTCPGDLHPTARLKLSKNPDYSCVTVMAYVNEDLVVSTAAAMVHGNTLSYAVRTQDGMSGAPVCDKYGRVLAVHQTNTGYTGGAVIIDPADFHPVKAPSQVELLKEEIERLKAQLNSATENATTVVTQQPSAALEQKSVSDSDVVDLVRTAMEREMKVLRDEINGILAPFLQKKKGKTKHGRGRVRRNLRKGVKLLTEEEYRELLEKGLDRETFLDLIDRIIGERSGYPDYDDEDYYDEDDDGWGMVGDDVEFDYTEVINFDQAKPIPAPRTTKQKICPEPEVESQPLDLSQKKEKQSEYEQQVVKSTKPQQLEHEQQVVKPIKPQKSEPQPYSQTYGKAPIWESYDFDWDEDDAKFILPAPHRLTKADEIVLGSKIVKLRTIIETAIKTQNYSALPEAVFELDKAAYEAGLEGFLQRVKSKNKAPKNYKGPQKTKGPKTTTH.

A coiled-coil region spans residues 104–142; that stretch reads KLIHKANALQERLRLSQEEKATLALDVQFLQHENVRLKE. Transmembrane regions (helical) follow at residues 239 to 259, 286 to 306, 313 to 333, and 344 to 364; these read VFYY…LAIG, VLPT…TLMV, LLAI…LCFM, and GLIA…LTGT. Catalysis depends on charge relay system; for serine protease activity residues His-461, Asp-489, and Ser-551. Positions 587–620 form a coiled coil; that stretch reads VKAPSQVELLKEEIERLKAQLNSATENATTVVTQ. An O-(5'-phospho-RNA)-tyrosine modification is found at Tyr-693. Disordered stretches follow at residues 756-828 and 915-935; these read AKPI…YSQT and NKAP…TTTH. The span at 922–935 shows a compositional bias: low complexity; the sequence is KGPQKTKGPKTTTH.

This sequence belongs to the astroviridae polyprotein 1A family. As to quaternary structure, monomer. Cleaved by the viral and host proteases. The protease is probably autocatalytically cleaved.

It is found in the host membrane. It carries out the reaction RNA(n) + a ribonucleoside 5'-triphosphate = RNA(n+1) + diphosphate. Responsible for the cleavage of the polyprotein into functional products. In terms of biological role, protein covalently attached to the 5' extremity of the genomic and subgenomic RNAs. It may serve as a primer for the replicase. The sequence is that of Non-structural polyprotein 1A (ORF1) from Human astrovirus-1 (HAstV-1).